A 207-amino-acid polypeptide reads, in one-letter code: Ras-related protein Rab-8A (207 aa).

GTP-binding residues include serine 17, glycine 18, valine 19, glycine 20, lysine 21, threonine 22, cysteine 23, serine 39, and threonine 40. Threonine 22 provides a ligand contact to Mg(2+). 2 consecutive short sequence motifs (switch) follow at residues aspartate 31–phenylalanine 45 and aspartate 63–glycine 80. Positions 40 and 63 each coordinate Mg(2+). GTP is bound by residues glycine 66, asparagine 121, lysine 122, aspartate 124, alanine 152, and lysine 153. Position 204 is a cysteine methyl ester (cysteine 204). A lipid anchor (S-geranylgeranyl cysteine) is attached at cysteine 204. Residues valine 205–leucine 207 constitute a propeptide, removed in mature form.

It belongs to the small GTPase superfamily. Rab family. Requires Mg(2+) as cofactor.

The protein localises to the cell membrane. It is found in the golgi apparatus. It localises to the endosome membrane. The protein resides in the recycling endosome membrane. Its subcellular location is the cell projection. The protein localises to the cilium. It is found in the cytoplasmic vesicle. It localises to the phagosome membrane. The protein resides in the cytoplasm. Its subcellular location is the cytoskeleton. The protein localises to the microtubule organizing center. It is found in the centrosome. It localises to the centriole. The protein resides in the cilium basal body. Its subcellular location is the midbody. The catalysed reaction is GTP + H2O = GDP + phosphate + H(+). Its activity is regulated as follows. Regulated by guanine nucleotide exchange factors (GEFs) which promote the exchange of bound GDP for free GTP, GTPase activating proteins (GAPs) which increase the GTP hydrolysis activity, and GDP dissociation inhibitors (GDIs) which inhibit the dissociation of the nucleotide from the GTPase. Activated in response to insulin. Its function is as follows. The small GTPases Rab are key regulators of intracellular membrane trafficking, from the formation of transport vesicles to their fusion with membranes. Rabs cycle between an inactive GDP-bound form and an active GTP-bound form that is able to recruit to membranes different sets of downstream effectors directly responsible for vesicle formation, movement, tethering and fusion. RAB8A is involved in polarized vesicular trafficking and neurotransmitter release. Together with RAB11A, RAB3IP, the exocyst complex, PARD3, PRKCI, ANXA2, CDC42 and DNMBP promotes transcytosis of PODXL to the apical membrane initiation sites (AMIS), apical surface formation and lumenogenesis. Regulates the compacted morphology of the Golgi. Together with MYO5B and RAB11A participates in epithelial cell polarization. Also involved in membrane trafficking to the cilium and ciliogenesis. Together with MICALL2, may also regulate adherens junction assembly. May play a role in insulin-induced transport to the plasma membrane of the glucose transporter GLUT4 and therefore play a role in glucose homeostasis. Involved in autophagy. Participates in the export of a subset of neosynthesized proteins through a Rab8-Rab10-Rab11-dependent endososomal export route. Targeted to and stabilized on stressed lysosomes through LRRK2 phosphorylation. Suppresses stress-induced lysosomal enlargement through EHBP1 and EHNP1L1 effector proteins. The chain is Ras-related protein Rab-8A (RAB8A) from Gallus gallus (Chicken).